Consider the following 91-residue polypeptide: Non-specific lipid-transfer protein 1 (91 aa).

4 disulfides stabilise this stretch: Cys-4/Cys-51, Cys-14/Cys-28, Cys-29/Cys-74, and Cys-49/Cys-88.

In terms of tissue distribution, detected in seeds (at protein level).

Its function is as follows. Plant non-specific lipid-transfer proteins transfer phospholipids as well as galactolipids across membranes. May play a role in wax or cutin deposition in the cell walls of expanding epidermal cells and certain secretory tissues. The chain is Non-specific lipid-transfer protein 1 from Trachyspermum ammi (Ajowan caraway).